Reading from the N-terminus, the 221-residue chain is tRNA (guanine-N(7)-)-methyltransferase (221 aa).

Residues E46, D71, and D120 each contribute to the S-adenosyl-L-methionine site. D120 is a catalytic residue. Residue D156 coordinates substrate.

This sequence belongs to the class I-like SAM-binding methyltransferase superfamily. TrmB family.

It catalyses the reaction guanosine(46) in tRNA + S-adenosyl-L-methionine = N(7)-methylguanosine(46) in tRNA + S-adenosyl-L-homocysteine. Its pathway is tRNA modification; N(7)-methylguanine-tRNA biosynthesis. Functionally, catalyzes the formation of N(7)-methylguanine at position 46 (m7G46) in tRNA. The sequence is that of tRNA (guanine-N(7)-)-methyltransferase from Cytophaga hutchinsonii (strain ATCC 33406 / DSM 1761 / CIP 103989 / NBRC 15051 / NCIMB 9469 / D465).